The sequence spans 156 residues: Cellulose synthase operon protein D (156 aa).

It functions in the pathway glycan metabolism; bacterial cellulose biosynthesis. Functionally, may have a major role in the perfection of crystallization, involved either in the pore structure itself or in the organization of the pores within the linear array of terminal synthesizing complexes (TCs). This Komagataeibacter xylinus (Gluconacetobacter xylinus) protein is Cellulose synthase operon protein D.